The following is a 413-amino-acid chain: Terephthalate 1,2-dioxygenase, terminal oxygenase component subunit alpha 2 (413 aa).

One can recognise a Rieske domain in the interval 41–144 (NYLCLESEIP…CKEEHGPRKL (104 aa)). [2Fe-2S] cluster contacts are provided by cysteine 82, histidine 84, cysteine 102, and histidine 105.

This sequence belongs to the bacterial ring-hydroxylating dioxygenase alpha subunit family. Heterotetramer composed of 2 alpha (TphA2I and TphA2II) and 2 beta (TphA3I and TphA3II) subunits. Part of a multicomponent enzyme system composed of a reductase (TphA1I or TphA1II) and a two-subunit oxygenase component (TphA2I or TphA2II and TphA3I or TphA3II). The cofactor is Fe cation. [2Fe-2S] cluster is required as a cofactor.

The catalysed reaction is terephthalate + NADH + O2 + H(+) = (3S,4R)-3,4-dihydroxycyclohexa-1,5-diene-1,4-dicarboxylate + NAD(+). Its activity is regulated as follows. Inhibited by EDTA. Functionally, component of the terephthalate 1,2-dioxygenase multicomponent enzyme system which catalyzes the dioxygenation of terephthalate (TER/TPA) to 1,2-dihydroxy-3,5-cyclohexadiene-1,4-dicarboxylic acid (DCD). It can also use 2,5-dicarboxypyridine (PDC) and 1,4-napthalenedicarboxylic acid (NDC) as substrates, and preferentially uses NADPH which is the physiological electron donor. This Comamonas sp protein is Terephthalate 1,2-dioxygenase, terminal oxygenase component subunit alpha 2 (tphA2II).